The following is a 92-amino-acid chain: Late cornified envelope protein 3E (92 aa).

Residues 1-10 (MSCQQNQKQC) are compositionally biased toward low complexity. Disordered regions lie at residues 1-22 (MSCQQNQKQCQPPPKCPSPKCP) and 64-92 (RRQRSNSCDRGSGQQGGGSGCCHGSGGCC). Residues 11–22 (QPPPKCPSPKCP) show a composition bias toward pro residues. A compositionally biased stretch (gly residues) spans 76–92 (GQQGGGSGCCHGSGGCC).

The protein belongs to the LCE family. Interacts with CYSRT1. In terms of tissue distribution, skin-specific. Expression was readily detected in adult trunk skin, adult arm skin, fetal skin, penal skin, vulva, esophagus and tongue. Not expressed in the cervix, rectum, lung, colon, or placenta.

In terms of biological role, precursors of the cornified envelope of the stratum corneum. In Homo sapiens (Human), this protein is Late cornified envelope protein 3E (LCE3E).